Consider the following 218-residue polypeptide: 7-cyano-7-deazaguanine synthase (218 aa).

9–19 contributes to the ATP binding site; the sequence is YSGGMDSFTVL. 4 residues coordinate Zn(2+): Cys-185, Cys-193, Cys-196, and Cys-199.

It belongs to the QueC family. Requires Zn(2+) as cofactor.

It catalyses the reaction 7-carboxy-7-deazaguanine + NH4(+) + ATP = 7-cyano-7-deazaguanine + ADP + phosphate + H2O + H(+). The protein operates within purine metabolism; 7-cyano-7-deazaguanine biosynthesis. In terms of biological role, catalyzes the ATP-dependent conversion of 7-carboxy-7-deazaguanine (CDG) to 7-cyano-7-deazaguanine (preQ(0)). This is 7-cyano-7-deazaguanine synthase from Alteromonas mediterranea (strain DSM 17117 / CIP 110805 / LMG 28347 / Deep ecotype).